The chain runs to 337 residues: Holliday junction branch migration complex subunit RuvB (337 aa).

Positions 4–186 (ADRLIHPQII…FGIPLRLEFY (183 aa)) are large ATPase domain (RuvB-L). ATP contacts are provided by residues Arg-26, Gly-67, Lys-70, Thr-71, Thr-72, 133–135 (EDY), Arg-176, Tyr-186, and Arg-223. Residue Thr-71 coordinates Mg(2+). The tract at residues 187–257 (NVKDLSSIVA…IAEAALDMLD (71 aa)) is small ATPAse domain (RuvB-S). Residues 260–337 (AEGFDYMDRK…NHFNIIKPDA (78 aa)) form a head domain (RuvB-H) region. 3 residues coordinate DNA: Arg-296, Arg-315, and Arg-320.

Belongs to the RuvB family. In terms of assembly, homohexamer. Forms an RuvA(8)-RuvB(12)-Holliday junction (HJ) complex. HJ DNA is sandwiched between 2 RuvA tetramers; dsDNA enters through RuvA and exits via RuvB. An RuvB hexamer assembles on each DNA strand where it exits the tetramer. Each RuvB hexamer is contacted by two RuvA subunits (via domain III) on 2 adjacent RuvB subunits; this complex drives branch migration. In the full resolvosome a probable DNA-RuvA(4)-RuvB(12)-RuvC(2) complex forms which resolves the HJ.

The protein localises to the cytoplasm. The catalysed reaction is ATP + H2O = ADP + phosphate + H(+). The RuvA-RuvB-RuvC complex processes Holliday junction (HJ) DNA during genetic recombination and DNA repair, while the RuvA-RuvB complex plays an important role in the rescue of blocked DNA replication forks via replication fork reversal (RFR). RuvA specifically binds to HJ cruciform DNA, conferring on it an open structure. The RuvB hexamer acts as an ATP-dependent pump, pulling dsDNA into and through the RuvAB complex. RuvB forms 2 homohexamers on either side of HJ DNA bound by 1 or 2 RuvA tetramers; 4 subunits per hexamer contact DNA at a time. Coordinated motions by a converter formed by DNA-disengaged RuvB subunits stimulates ATP hydrolysis and nucleotide exchange. Immobilization of the converter enables RuvB to convert the ATP-contained energy into a lever motion, pulling 2 nucleotides of DNA out of the RuvA tetramer per ATP hydrolyzed, thus driving DNA branch migration. The RuvB motors rotate together with the DNA substrate, which together with the progressing nucleotide cycle form the mechanistic basis for DNA recombination by continuous HJ branch migration. Branch migration allows RuvC to scan DNA until it finds its consensus sequence, where it cleaves and resolves cruciform DNA. This chain is Holliday junction branch migration complex subunit RuvB, found in Shewanella halifaxensis (strain HAW-EB4).